A 751-amino-acid chain; its full sequence is Semaphorin-3C (751 aa).

Positions 1-21 are cleaved as a signal peptide; that stretch reads MAVLALHAVFGIFIYFSSVKG. Residues 28–511 enclose the Sema domain; sequence RVFLTFNELQ…SEEGVTQVPL (484 aa). N-linked (GlcNAc...) asparagine glycosylation is present at asparagine 81. Cysteine 101 and cysteine 112 are disulfide-bonded. A glycan (N-linked (GlcNAc...) asparagine) is linked at asparagine 123. Intrachain disulfides connect cysteine 130–cysteine 139, cysteine 266–cysteine 378, and cysteine 290–cysteine 338. Asparagine 268 carries an N-linked (GlcNAc...) asparagine glycan. Residue asparagine 465 is glycosylated (N-linked (GlcNAc...) asparagine). Residues cysteine 514 and cysteine 532 are joined by a disulfide bond. Positions 571-655 constitute an Ig-like C2-type domain; sequence AYRNAAETVQ…TENNFKQTLA (85 aa). N-linked (GlcNAc...) asparagine glycosylation is found at asparagine 585 and asparagine 586. Cysteines 643 and 709 form a disulfide. Residues 712 to 731 are compositionally biased toward basic and acidic residues; it reads SRQQGQRREEPQKMRGDYSK. The disordered stretch occupies residues 712-751; sequence SRQQGQRREEPQKMRGDYSKLKALINSRKSRNRRNQLPAS.

Belongs to the semaphorin family. As to expression, collapsin-1, -2, -3, and -5 bind to overlapping but distinct axon tracts.

The protein localises to the secreted. Its function is as follows. Induces the collapse and paralysis of neuronal growth cones. Could potentially act as repulsive cues toward specific neuronal populations. Binds to neuropilin. The chain is Semaphorin-3C (SEMA3C) from Gallus gallus (Chicken).